We begin with the raw amino-acid sequence, 651 residues long: Acetyl-coenzyme A synthetase (651 aa).

CoA is bound by residues 189-192, Thr-311, and Asn-335; that span reads RGGK. ATP is bound by residues 387–389, 411–416, Asp-500, and Arg-515; these read GEP and DTWWQT. Ser-523 lines the CoA pocket. Arg-526 lines the ATP pocket. Residues Val-537, His-539, and Val-542 each contribute to the Mg(2+) site. Arg-584 lines the CoA pocket. Lys-609 is subject to N6-acetyllysine.

The protein belongs to the ATP-dependent AMP-binding enzyme family. The cofactor is Mg(2+). Acetylated. Deacetylation by the SIR2-homolog deacetylase activates the enzyme.

It catalyses the reaction acetate + ATP + CoA = acetyl-CoA + AMP + diphosphate. In terms of biological role, catalyzes the conversion of acetate into acetyl-CoA (AcCoA), an essential intermediate at the junction of anabolic and catabolic pathways. AcsA undergoes a two-step reaction. In the first half reaction, AcsA combines acetate with ATP to form acetyl-adenylate (AcAMP) intermediate. In the second half reaction, it can then transfer the acetyl group from AcAMP to the sulfhydryl group of CoA, forming the product AcCoA. The protein is Acetyl-coenzyme A synthetase of Rhizobium etli (strain CIAT 652).